A 229-amino-acid polypeptide reads, in one-letter code: Ribosome maturation factor RimM (229 aa).

The interval 1–21 (MAGHDSGNAKRGRSPSFGVFV) is disordered. Residues 148 to 229 (ADEFYWVDLI…RVVVDWEADY (82 aa)) form the PRC barrel domain.

This sequence belongs to the RimM family. As to quaternary structure, binds ribosomal protein uS19.

It is found in the cytoplasm. Functionally, an accessory protein needed during the final step in the assembly of 30S ribosomal subunit, possibly for assembly of the head region. Essential for efficient processing of 16S rRNA. May be needed both before and after RbfA during the maturation of 16S rRNA. It has affinity for free ribosomal 30S subunits but not for 70S ribosomes. This chain is Ribosome maturation factor RimM, found in Burkholderia pseudomallei (strain 1106a).